We begin with the raw amino-acid sequence, 210 residues long: Ribosomal RNA large subunit methyltransferase E (210 aa).

Residues Gly-60, Trp-62, Asp-85, Asp-101, and Asp-126 each contribute to the S-adenosyl-L-methionine site. Catalysis depends on Lys-166, which acts as the Proton acceptor.

The protein belongs to the class I-like SAM-binding methyltransferase superfamily. RNA methyltransferase RlmE family.

Its subcellular location is the cytoplasm. The catalysed reaction is uridine(2552) in 23S rRNA + S-adenosyl-L-methionine = 2'-O-methyluridine(2552) in 23S rRNA + S-adenosyl-L-homocysteine + H(+). Its function is as follows. Specifically methylates the uridine in position 2552 of 23S rRNA at the 2'-O position of the ribose in the fully assembled 50S ribosomal subunit. This chain is Ribosomal RNA large subunit methyltransferase E, found in Bordetella pertussis (strain Tohama I / ATCC BAA-589 / NCTC 13251).